Reading from the N-terminus, the 136-residue chain is Large ribosomal subunit protein uL16 (136 aa).

The protein belongs to the universal ribosomal protein uL16 family. In terms of assembly, part of the 50S ribosomal subunit.

Its function is as follows. Binds 23S rRNA and is also seen to make contacts with the A and possibly P site tRNAs. In Buchnera aphidicola subsp. Acyrthosiphon pisum (strain 5A), this protein is Large ribosomal subunit protein uL16.